The following is a 346-amino-acid chain: Methionine import ATP-binding protein MetN 1 (346 aa).

Positions 2–241 constitute an ABC transporter domain; it reads IELKNVSKVF…PQHVTTKKFV (240 aa). 38-45 is a binding site for ATP; sequence GYSGAGKS.

Belongs to the ABC transporter superfamily. Methionine importer (TC 3.A.1.24) family. As to quaternary structure, the complex is composed of two ATP-binding proteins (MetN), two transmembrane proteins (MetI) and a solute-binding protein (MetQ).

The protein localises to the cell membrane. The catalysed reaction is L-methionine(out) + ATP + H2O = L-methionine(in) + ADP + phosphate + H(+). It carries out the reaction D-methionine(out) + ATP + H2O = D-methionine(in) + ADP + phosphate + H(+). Its function is as follows. Part of the ABC transporter complex MetNIQ involved in methionine import. Responsible for energy coupling to the transport system. In Bacillus anthracis, this protein is Methionine import ATP-binding protein MetN 1.